A 107-amino-acid polypeptide reads, in one-letter code: Pyrimidine/purine nucleoside phosphorylase (107 aa).

This sequence belongs to the nucleoside phosphorylase PpnP family.

The enzyme catalyses a purine D-ribonucleoside + phosphate = a purine nucleobase + alpha-D-ribose 1-phosphate. It carries out the reaction adenosine + phosphate = alpha-D-ribose 1-phosphate + adenine. The catalysed reaction is cytidine + phosphate = cytosine + alpha-D-ribose 1-phosphate. It catalyses the reaction guanosine + phosphate = alpha-D-ribose 1-phosphate + guanine. The enzyme catalyses inosine + phosphate = alpha-D-ribose 1-phosphate + hypoxanthine. It carries out the reaction thymidine + phosphate = 2-deoxy-alpha-D-ribose 1-phosphate + thymine. The catalysed reaction is uridine + phosphate = alpha-D-ribose 1-phosphate + uracil. It catalyses the reaction xanthosine + phosphate = alpha-D-ribose 1-phosphate + xanthine. Functionally, catalyzes the phosphorolysis of diverse nucleosides, yielding D-ribose 1-phosphate and the respective free bases. Can use uridine, adenosine, guanosine, cytidine, thymidine, inosine and xanthosine as substrates. Also catalyzes the reverse reactions. In Aromatoleum aromaticum (strain DSM 19018 / LMG 30748 / EbN1) (Azoarcus sp. (strain EbN1)), this protein is Pyrimidine/purine nucleoside phosphorylase.